The chain runs to 270 residues: Probable septum site-determining protein MinC (270 aa).

The protein belongs to the MinC family. In terms of assembly, interacts with MinD and FtsZ.

In terms of biological role, cell division inhibitor that blocks the formation of polar Z ring septums. Rapidly oscillates between the poles of the cell to destabilize FtsZ filaments that have formed before they mature into polar Z rings. Prevents FtsZ polymerization. This is Probable septum site-determining protein MinC from Cupriavidus necator (strain ATCC 17699 / DSM 428 / KCTC 22496 / NCIMB 10442 / H16 / Stanier 337) (Ralstonia eutropha).